The primary structure comprises 406 residues: 1-deoxy-D-xylulose 5-phosphate reductoisomerase (406 aa).

The NADPH site is built by Thr21, Gly22, Ser23, Ile24, Gly47, Gln50, and Asn127. Lys128 is a 1-deoxy-D-xylulose 5-phosphate binding site. An NADPH-binding site is contributed by Glu129. Residue Asp151 participates in Mn(2+) binding. 1-deoxy-D-xylulose 5-phosphate contacts are provided by Ser152, Glu153, Ser177, and His200. A Mn(2+)-binding site is contributed by Glu153. Residue Gly206 coordinates NADPH. 1-deoxy-D-xylulose 5-phosphate-binding residues include Ser213, Asn218, Lys219, and Glu222. Glu222 contributes to the Mn(2+) binding site.

It belongs to the DXR family. It depends on Mg(2+) as a cofactor. Mn(2+) serves as cofactor.

It carries out the reaction 2-C-methyl-D-erythritol 4-phosphate + NADP(+) = 1-deoxy-D-xylulose 5-phosphate + NADPH + H(+). The protein operates within isoprenoid biosynthesis; isopentenyl diphosphate biosynthesis via DXP pathway; isopentenyl diphosphate from 1-deoxy-D-xylulose 5-phosphate: step 1/6. Functionally, catalyzes the NADPH-dependent rearrangement and reduction of 1-deoxy-D-xylulose-5-phosphate (DXP) to 2-C-methyl-D-erythritol 4-phosphate (MEP). In Mycobacterium leprae (strain Br4923), this protein is 1-deoxy-D-xylulose 5-phosphate reductoisomerase.